The primary structure comprises 269 residues: Cytochrome c oxidase subunit 3 (269 aa).

Residues 1–22 (MTNLIRSNFQDHPFHLVSPSPW) lie on the Mitochondrial matrix side of the membrane. Residues 23 to 41 (PLNTSVCLLNLTTTGALSM) form a helical membrane-spanning segment. The Mitochondrial intermembrane segment spans residues 42–48 (HNFNNIH). The helical transmembrane segment at 49-73 (YLYYIALIGLVSAMFLWFRDIISEG) threads the bilayer. The Mitochondrial matrix portion of the chain corresponds to 74–80 (TFLGDHT). Residues 81–114 (LAVQRGLNLGIILFIVSEALFFLAIFWAFFHSAL) form a helical membrane-spanning segment. Residues 115-137 (TPTVELGAQWPPIGIEPVNPFEL) are Mitochondrial intermembrane-facing. Residues 138-161 (PLLNTVILLSSGATITYAHHALIK) form a helical membrane-spanning segment. Over 162–164 (GER) the chain is Mitochondrial matrix. The chain crosses the membrane as a helical span at residues 165-188 (EGALYGSIATILLAIIFTGFQGVE). The Mitochondrial intermembrane segment spans residues 189–201 (YSVSSFTISDGAF). Residues 202–230 (GTCFFFSTGFHGIHVIIGTIFLAVALWRI) form a helical membrane-spanning segment. At 231–248 (FAYHLTDNHHVGFEGGIL) the chain is on the mitochondrial matrix side. A helical transmembrane segment spans residues 249 to 265 (YWHFVDVVWLFLYISVY). At 266–269 (YWGS) the chain is on the mitochondrial intermembrane side.

The protein belongs to the cytochrome c oxidase subunit 3 family. Component of the cytochrome c oxidase (complex IV, CIV), a multisubunit enzyme composed of 11 subunits. The complex is composed of a catalytic core of 3 subunits Cox1, Cox2 and Cox3, encoded in the mitochondrial DNA, and 8 supernumerary subunits Cox4, Cox5a/Cox5, Cox6, Cox7, Cox8, Cox7a/Cox9, Cox6b/Cox12 and Cox6a/Cox13, which are encoded in the nuclear genome. The complex exists as a monomer or a dimer and forms respiratory supercomplexes (SCs) in the inner mitochondrial membrane with NADH-ubiquinone oxidoreductase (complex I, CI) and ubiquinol-cytochrome c oxidoreductase (cytochrome b-c1 complex, complex III, CIII), resulting in various different assemblies (supercomplexes I(1)IV(1), I(1)III(3)IV(2), III(2)IV(1) and III(2)IV(2) as well as larger supercomplexes of compositions like I(1)III(2)IV(5-6)).

The protein localises to the mitochondrion inner membrane. The catalysed reaction is 4 Fe(II)-[cytochrome c] + O2 + 8 H(+)(in) = 4 Fe(III)-[cytochrome c] + 2 H2O + 4 H(+)(out). In terms of biological role, component of the cytochrome c oxidase, the last enzyme in the mitochondrial electron transport chain which drives oxidative phosphorylation. The respiratory chain contains 3 multisubunit complexes succinate dehydrogenase (complex II, CII), ubiquinol-cytochrome c oxidoreductase (cytochrome b-c1 complex, complex III, CIII) and cytochrome c oxidase (complex IV, CIV), that cooperate to transfer electrons derived from NADH and succinate to molecular oxygen, creating an electrochemical gradient over the inner membrane that drives transmembrane transport and the ATP synthase. Cytochrome c oxidase is the component of the respiratory chain that catalyzes the reduction of oxygen to water. Electrons originating from reduced cytochrome c in the intermembrane space (IMS) are transferred via the dinuclear copper A center (CU(A)) of Cox2 and heme A of Cox1 to the active site in Cox1, a binuclear center (BNC) formed by heme A3 and copper B (CU(B)). The BNC reduces molecular oxygen to 2 water molecules using 4 electrons from cytochrome c in the IMS and 4 protons from the mitochondrial matrix. This chain is Cytochrome c oxidase subunit 3 (cox-3), found in Neurospora crassa (strain ATCC 24698 / 74-OR23-1A / CBS 708.71 / DSM 1257 / FGSC 987).